Consider the following 177-residue polypeptide: RNA pyrophosphohydrolase (177 aa).

A Nudix hydrolase domain is found at 6 to 149; the sequence is GYRPNVGIVI…KRDVYRRVMK (144 aa). Residues 38–59 carry the Nudix box motif; that stretch reads GGINPGESAEQAMYRELFEEVG.

It belongs to the Nudix hydrolase family. RppH subfamily. The cofactor is a divalent metal cation.

Its function is as follows. Accelerates the degradation of transcripts by removing pyrophosphate from the 5'-end of triphosphorylated RNA, leading to a more labile monophosphorylated state that can stimulate subsequent ribonuclease cleavage. The polypeptide is RNA pyrophosphohydrolase (Cronobacter sakazakii (strain ATCC BAA-894) (Enterobacter sakazakii)).